The following is a 69-amino-acid chain: Trypsin/subtilisin inhibitor (69 aa).

Residues cysteine 4 and cysteine 49 are joined by a disulfide bond.

This sequence belongs to the protease inhibitor I13 (potato type I serine protease inhibitor) family.

In terms of biological role, inhibitor of trypsin, chymotrypsin, subtilisin, etc. This is Trypsin/subtilisin inhibitor from Amaranthus caudatus (Love-lies-bleeding).